The sequence spans 469 residues: Zinc finger CCCH domain-containing protein 30 (469 aa).

A C3H1-type zinc finger spans residues Val415–Ser443. Residues Ala444–Asn469 are disordered. Residues Asp449–Arg458 are compositionally biased toward basic residues.

The sequence is that of Zinc finger CCCH domain-containing protein 30 from Oryza sativa subsp. japonica (Rice).